A 1040-amino-acid polypeptide reads, in one-letter code: BEM1-interacting protein 2 (1040 aa).

The tract at residues 1 to 39 (MSNDREVPTLSQLNTTVSRDKDVSDTLSPDFDSKGSATG) is disordered. Residues 8–17 (PTLSQLNTTV) show a composition bias toward polar residues. 3 positions are modified to phosphoserine: Ser-18, Ser-24, and Ser-28. An SH3 domain is found at 43-107 (GNFPMYIAIN…PVVFTQKITV (65 aa)). An SAM domain is found at 266–330 (WSPEEITAYF…FKEIEKIKEA (65 aa)). Disordered regions lie at residues 365–412 (YRGH…SQEA), 437–478 (VSPR…WQSP), and 491–744 (IDQY…ARPV). Residues 372–397 (TSQSLEDLPSQQNFIPTPRNTRNSSA) show a composition bias toward polar residues. The segment covering 444-457 (KPPSYPSPAQPPKS) has biased composition (pro residues). Ser-450 carries the phosphoserine modification. Residues 459–478 (LLNNTRTSPSPAQLYSWQSP) are compositionally biased toward polar residues. Residues 495–505 (SSSDSNFNSRS) are compositionally biased toward low complexity. Phosphoserine occurs at positions 519, 523, and 546. The segment covering 557-570 (SSDRKSSCSSHEEE) has biased composition (basic and acidic residues). A compositionally biased stretch (polar residues) spans 573–598 (QETMNTFERPTSSIYADGSTIASISN). Residues 600–609 (KLAHEKEGKK) show a composition bias toward basic and acidic residues. A compositionally biased stretch (low complexity) spans 632–648 (LKRSSSASRTSSFKKSS). Ser-652 is subject to Phosphoserine. The segment covering 654-684 (FRQQFTDNAARSSSPEENPITSMPSEKNSSP) has biased composition (polar residues). Basic residues predominate over residues 690 to 701 (SSKKSRSKRRSV). Over residues 702 to 732 (SAKEAEIFTETVKDDKNKRSASEAIKGETLK) the composition is skewed to basic and acidic residues. One can recognise a PH domain in the interval 768 to 887 (DADFSGWMSK…WMAALIKTTI (120 aa)). Residues 943-957 (QLQQQQHDNNQGQAD) show a composition bias toward low complexity. 2 disordered regions span residues 943-986 (QLQQ…NNTT) and 1007-1040 (VARNSSMRGTEKKGKFSTEEDYFGDNSKHKTDKI). Polar residues predominate over residues 973-986 (TISTPNLSSANNTT). Over residues 1015–1024 (GTEKKGKFST) the composition is skewed to basic and acidic residues.

Interacts with BEM1. Interacts with TOS7.

It is found in the bud. The protein resides in the bud neck. Functionally, protein involved in bud formation. Functions redundantly with BOI1 to promote the fusion of secretory vesicles with the plasma membrane at sites of polarized growth. Acts as an abscission inhibitor during cytokinesis in response to chromatin bridges. The chain is BEM1-interacting protein 2 from Saccharomyces cerevisiae (strain ATCC 204508 / S288c) (Baker's yeast).